The chain runs to 257 residues: NAD-capped RNA hydrolase NudC (257 aa).

A substrate-binding site is contributed by R69. C98 and C101 together coordinate Zn(2+). E111 is a substrate binding site. Zn(2+) is bound by residues C116 and C119. Residue Y124 coordinates substrate. The 124-residue stretch at 125 to 248 (PQIAPCIIVA…TVARRLIEDT (124 aa)) folds into the Nudix hydrolase domain. The a divalent metal cation site is built by A158, E174, and E178. The short motif at 159–180 (GFVEVGETLEQAVAREVMEESG) is the Nudix box element. Residue 192–199 (QPWPFPQS) coordinates substrate. Residue E219 participates in a divalent metal cation binding. Residue A241 coordinates substrate.

The protein belongs to the Nudix hydrolase family. NudC subfamily. Homodimer. Mg(2+) serves as cofactor. The cofactor is Mn(2+). Zn(2+) is required as a cofactor.

It catalyses the reaction a 5'-end NAD(+)-phospho-ribonucleoside in mRNA + H2O = a 5'-end phospho-adenosine-phospho-ribonucleoside in mRNA + beta-nicotinamide D-ribonucleotide + 2 H(+). The catalysed reaction is NAD(+) + H2O = beta-nicotinamide D-ribonucleotide + AMP + 2 H(+). It carries out the reaction NADH + H2O = reduced beta-nicotinamide D-ribonucleotide + AMP + 2 H(+). In terms of biological role, mRNA decapping enzyme that specifically removes the nicotinamide adenine dinucleotide (NAD) cap from a subset of mRNAs by hydrolyzing the diphosphate linkage to produce nicotinamide mononucleotide (NMN) and 5' monophosphate mRNA. The NAD-cap is present at the 5'-end of some mRNAs and stabilizes RNA against 5'-processing. Has preference for mRNAs with a 5'-end purine. Catalyzes the hydrolysis of a broad range of dinucleotide pyrophosphates. This chain is NAD-capped RNA hydrolase NudC, found in Citrobacter koseri (strain ATCC BAA-895 / CDC 4225-83 / SGSC4696).